The primary structure comprises 352 residues: UDP-N-acetylglucosamine--N-acetylmuramyl-(pentapeptide) pyrophosphoryl-undecaprenol N-acetylglucosamine transferase (352 aa).

UDP-N-acetyl-alpha-D-glucosamine is bound by residues 11 to 13, N120, R161, S188, and Q286; that span reads TGG.

It belongs to the glycosyltransferase 28 family. MurG subfamily.

It localises to the cell inner membrane. It carries out the reaction di-trans,octa-cis-undecaprenyl diphospho-N-acetyl-alpha-D-muramoyl-L-alanyl-D-glutamyl-meso-2,6-diaminopimeloyl-D-alanyl-D-alanine + UDP-N-acetyl-alpha-D-glucosamine = di-trans,octa-cis-undecaprenyl diphospho-[N-acetyl-alpha-D-glucosaminyl-(1-&gt;4)]-N-acetyl-alpha-D-muramoyl-L-alanyl-D-glutamyl-meso-2,6-diaminopimeloyl-D-alanyl-D-alanine + UDP + H(+). Its pathway is cell wall biogenesis; peptidoglycan biosynthesis. Cell wall formation. Catalyzes the transfer of a GlcNAc subunit on undecaprenyl-pyrophosphoryl-MurNAc-pentapeptide (lipid intermediate I) to form undecaprenyl-pyrophosphoryl-MurNAc-(pentapeptide)GlcNAc (lipid intermediate II). The sequence is that of UDP-N-acetylglucosamine--N-acetylmuramyl-(pentapeptide) pyrophosphoryl-undecaprenol N-acetylglucosamine transferase from Prochlorococcus marinus (strain NATL2A).